A 269-amino-acid chain; its full sequence is UPF0354 protein YtpQ (269 aa).

The protein belongs to the UPF0354 family.

The sequence is that of UPF0354 protein YtpQ (ytpQ) from Bacillus subtilis (strain 168).